Consider the following 457-residue polypeptide: Multidrug resistance protein MdtK (457 aa).

Transmembrane regions (helical) follow at residues 11–31, 53–73, 93–113, 127–147, 160–180, 189–209, 243–263, 276–296, 314–334, 350–370, 387–407, and 418–438; these read LLAL…MGFV, IWLP…PVIA, WLAG…GYII, AVGY…FQVA, GMVM…IFIY, GGVG…LAMV, LPIA…ALLV, IALN…AAVT, AART…IFTV, VVTL…SDSI, IFYI…YILA, and PAGF…MMML.

Belongs to the multi antimicrobial extrusion (MATE) (TC 2.A.66.1) family. MdtK subfamily.

The protein resides in the cell inner membrane. Multidrug efflux pump that functions probably as a Na(+)/drug antiporter. In Escherichia coli O17:K52:H18 (strain UMN026 / ExPEC), this protein is Multidrug resistance protein MdtK.